The sequence spans 363 residues: RNA exonuclease NGL1 (363 aa).

The N-terminal 23 residues, 1–23 (MFTRRFIPVVQSTKQNIGKYVRK), are a transit peptide targeting the mitochondrion.

The protein belongs to the CCR4/nocturin family.

Its subcellular location is the mitochondrion. This chain is RNA exonuclease NGL1 (NGL1), found in Saccharomyces cerevisiae (strain ATCC 204508 / S288c) (Baker's yeast).